We begin with the raw amino-acid sequence, 135 residues long: Transcriptional regulator HosA (135 aa).

The region spanning 4–134 is the HTH marR-type domain; that stretch reads RNKAFHQLRQ…FVQLVRKMMN (131 aa). A DNA-binding region (H-T-H motif) is located at residues 48–71; that stretch reads QVALIEAAVSTKATLAEMLARMEN.

In terms of biological role, involved in the temperature-dependent positive control of flagellum-driven swimming motility and cellular aggregation. Regulates fliC expression by directly interacting with fliC promoter. This Escherichia coli O157:H7 protein is Transcriptional regulator HosA (hosA).